Here is a 411-residue protein sequence, read N- to C-terminus: MMP alpha-(1-&gt;4)-mannosyltransferase (411 aa).

The protein belongs to the glycosyltransferase group 1 family. Glycosyltransferase 4 subfamily.

The catalysed reaction is [3-O-methyl-alpha-D-mannosyl-(1-&gt;4)](n)-3-O-methyl-D-mannose + GDP-alpha-D-mannose = alpha-D-mannosyl-(1-&gt;4)-[3-O-methyl-alpha-D-mannosyl-(1-&gt;4)](n)-3-O-methyl-D-mannose + GDP + H(+). The enzyme catalyses [3-O-methyl-alpha-D-mannosyl-(1-&gt;4)](n)-1-O,3-O-dimethyl-alpha-D-mannose + GDP-alpha-D-mannose = alpha-D-mannosyl-(1-&gt;4)-[3-O-methyl-alpha-D-mannosyl-(1-&gt;4)](n)-1-O,3-O-dimethyl-alpha-D-mannose + GDP + H(+). Activity is significantly enhanced in the presence of Mg(2+). Its function is as follows. Glycosyltransferase involved in the biosynthesis of 3-O-methylmannose polysaccharides (MMP), which are intracellular polymethylated polysaccharides implicated in the modulation of fatty acid metabolism in non-tuberculous mycobacteria. Highly specific alpha-(1-&gt;4)-mannosyltransferase that can transfer mannose units from GDP-mannose to a wide range of alpha-(1-&gt;4) oligomannosides longer than three mannoses, including all hydrolytic products of MmpH. Can use synthetic trimannosides and tetramannosides as substrates, but not mono- and disaccharides, and is significantly more active with the methylated substrates, preferring the tetramannosides over the trimannosides. The protein is MMP alpha-(1-&gt;4)-mannosyltransferase of Mycolicibacterium hassiacum (strain DSM 44199 / CIP 105218 / JCM 12690 / 3849) (Mycobacterium hassiacum).